Consider the following 950-residue polypeptide: Oxysterol-binding protein-related protein 1 (950 aa).

The interval 1 to 237 (MNTEAEQQLL…NKVVHKALKR (237 aa)) is interaction with RAB7A. ANK repeat units follow at residues 47-76 (LGWTPLHLACYFGHKQVVQDLLKAGAKVNM), 80-109 (MGDTPLHRAAFTGRKELVMLLLEYNADTTV), and 175-204 (LGNTPLHCAAYRAHKQCVLKLLRSGADPSL). Positions 235–334 (LKRFEGPLWK…WLEAIEEHSA (100 aa)) constitute a PH domain. Residues 430–463 (NFKLEQEQEKNKILSEALETLATEHHELERSLVE) are a coiled coil. The short motif at 469 to 483 (SILSEDEFYDALSGS) is the FFAT element. Disordered stretches follow at residues 795-821 (KKNTEEKKTSKQASTSEESDEMPVPDS) and 881-913 (MENGEIDQASEEKKRLEEKQRAARKNRSKSEED). A coiled-coil region spans residues 877 to 913 (DIRAMENGEIDQASEEKKRLEEKQRAARKNRSKSEED). Residues 890-901 (SEEKKRLEEKQR) are compositionally biased toward basic and acidic residues.

Belongs to the OSBP family. As to quaternary structure, interacts (via FFAT motif) with VAPA. Interacts (via FFAT motif) with VAPB. Interacts with the GTP-bound form of RAB7A. Interacts with OAS1B. Interacts (via FFAT motif) with MOSPD2 (via MSP domain). Detected in prostate and liver.

It localises to the late endosome. In terms of biological role, binds phospholipids; exhibits strong binding to phosphatidic acid and weak binding to phosphatidylinositol 3-phosphate. Stabilizes GTP-bound RAB7A on late endosomes/lysosomes and alters functional properties of late endocytic compartments via its interaction with RAB7A. Binds 25-hydroxycholesterol and cholesterol. This Rattus norvegicus (Rat) protein is Oxysterol-binding protein-related protein 1.